A 20-amino-acid polypeptide reads, in one-letter code: KVYSRXELAKVLQDFGREAY.

The protein belongs to the glycosyl hydrolase 22 family.

Sperm surface membrane protein that may be involved in sperm-egg plasma membrane adhesion and fusion during fertilization. It could be a potential receptor for the egg oligosaccharide residue N-acetylglucosamine, which is present in the extracellular matrix over the egg plasma membrane. The polypeptide is Sperm acrosome membrane-associated protein 3, processed form (SPACA3) (Vulpes vulpes (Red fox)).